The following is a 218-amino-acid chain: Small ribosomal subunit protein uS3c (218 aa).

Residues 47 to 118 (VQKNMRTSSG…KLNIAVTRIA (72 aa)) form the KH type-2 domain.

The protein belongs to the universal ribosomal protein uS3 family. As to quaternary structure, part of the 30S ribosomal subunit.

It is found in the plastid. The protein resides in the chloroplast. This Solanum bulbocastanum (Wild potato) protein is Small ribosomal subunit protein uS3c (rps3).